The following is a 190-amino-acid chain: MFQGADSQAGKSGSRSMKPPGGESSDLFGSPEEGISSSKPNRMASNIFGPTEEPKNIPKRTNPPGGKGSGIFDESTPVQTRQRLNPPGGKTSDIFGSPVTATAPLAHPNKPKDHVLLCEGEDSKSDLKAATDSTPRGEQSDKGSSKEVEHAKIPEPTPTVDSHEPRLGPRPRSHNKVLNPPGGKSSLSFY.

N-acetylmethionine is present on Met-1. The segment covering 1–15 (MFQGADSQAGKSGSR) has biased composition (polar residues). Residues 1 to 190 (MFQGADSQAG…PGGKSSLSFY (190 aa)) are disordered. The residue at position 11 (Lys-11) is an N6-acetyllysine. Position 30 is a phosphoserine (Ser-30). A compositionally biased stretch (polar residues) spans 35 to 44 (ISSSKPNRMA). Ser-45, Ser-69, and Ser-97 each carry phosphoserine. 2 stretches are compositionally biased toward basic and acidic residues: residues 110 to 129 (KPKD…DLKA) and 138 to 153 (EQSD…HAKI). Position 144 is a phosphoserine (Ser-144).

The protein belongs to the JUPITER family. Monomer. Dimer. Interacts with TPCN1.

The protein resides in the cytoplasm. The protein localises to the nucleus. In terms of biological role, nicotinic acid adenine dinucleotide phosphate (NAADP) binding protein required for NAADP-evoked intracellular calcium release. Confers NAADP-sensitivity to the two pore channels (TPCs) complex. Enables NAADP to activate Ca(2+) release from the endoplasmic reticulum through ryanodine receptors. This chain is Jupiter microtubule associated homolog 2, found in Mus musculus (Mouse).